Consider the following 325-residue polypeptide: Protease HtpX homolog (325 aa).

A helical transmembrane segment spans residues 20–40 (IGYLLGGGGGMMIALVIAVAM). His130 serves as a coordination point for Zn(2+). Residue Glu131 is part of the active site. His134 contributes to the Zn(2+) binding site. 2 helical membrane-spanning segments follow: residues 145–165 (IVAT…FLGG) and 173–193 (VMGV…AMIV). Position 202 (Glu202) interacts with Zn(2+). Residues 288 to 325 (AMTARAAAPSQNSGPWGQRSDNAGGNSNGGSRYRGPWS) are disordered. A compositionally biased stretch (low complexity) spans 306–325 (RSDNAGGNSNGGSRYRGPWS).

Belongs to the peptidase M48B family. It depends on Zn(2+) as a cofactor.

Its subcellular location is the cell inner membrane. The polypeptide is Protease HtpX homolog (Brucella abortus (strain S19)).